Here is a 177-residue protein sequence, read N- to C-terminus: Coatomer subunit zeta-1 (177 aa).

An N-acetylmethionine modification is found at methionine 1.

It belongs to the adaptor complexes small subunit family. As to quaternary structure, oligomeric complex that consists of at least the alpha, beta, beta', gamma, delta, epsilon and zeta subunits.

Its subcellular location is the cytoplasm. The protein resides in the golgi apparatus membrane. It is found in the cytoplasmic vesicle. The protein localises to the COPI-coated vesicle membrane. In terms of biological role, the coatomer is a cytosolic protein complex that binds to dilysine motifs and reversibly associates with Golgi non-clathrin-coated vesicles, which further mediate biosynthetic protein transport from the ER, via the Golgi up to the trans Golgi network. Coatomer complex is required for budding from Golgi membranes, and is essential for the retrograde Golgi-to-ER transport of dilysine-tagged proteins. The zeta subunit may be involved in regulating the coat assembly and, hence, the rate of biosynthetic protein transport due to its association-dissociation properties with the coatomer complex. This chain is Coatomer subunit zeta-1 (COPZ1), found in Homo sapiens (Human).